Here is a 489-residue protein sequence, read N- to C-terminus: ATP-dependent zinc metalloprotease FtsH 3 (489 aa).

The Cytoplasmic portion of the chain corresponds to 1-14 (MNPRPVRPGGSLQQ). The chain crosses the membrane as a helical span at residues 15–31 (SLLALGSLSVAVGLAVW). Residues 32–489 (QQRTLGRGRS…GPRPARPAMN (458 aa)) lie on the Extracellular side of the membrane. 95-102 (GPPGTGKT) provides a ligand contact to ATP. His315 is a binding site for Zn(2+). Glu316 is an active-site residue. 2 residues coordinate Zn(2+): His319 and Asp391.

In the central section; belongs to the AAA ATPase family. It in the C-terminal section; belongs to the peptidase M41 family. Homohexamer. Zn(2+) is required as a cofactor.

It localises to the cell membrane. In terms of biological role, acts as a processive, ATP-dependent zinc metallopeptidase for both cytoplasmic and membrane proteins. Plays a role in the quality control of integral membrane proteins. This Sphaerobacter thermophilus (strain ATCC 49802 / DSM 20745 / KCCM 41009 / NCIMB 13125 / S 6022) protein is ATP-dependent zinc metalloprotease FtsH 3.